The following is a 247-amino-acid chain: Probable transcriptional regulatory protein Gbem_3313 (247 aa).

Belongs to the TACO1 family.

The protein localises to the cytoplasm. This is Probable transcriptional regulatory protein Gbem_3313 from Citrifermentans bemidjiense (strain ATCC BAA-1014 / DSM 16622 / JCM 12645 / Bem) (Geobacter bemidjiensis).